The primary structure comprises 287 residues: Putative DNA-3-methyladenine glycosylase YfjP (287 aa).

The Proton acceptor role is filled by aspartate 242.

The protein belongs to the alkylbase DNA glycosidase AlkA family.

It catalyses the reaction Hydrolysis of alkylated DNA, releasing 3-methyladenine, 3-methylguanine, 7-methylguanine and 7-methyladenine.. Functionally, hydrolysis of the deoxyribose N-glycosidic bond to excise 3-methyladenine, 3-methylguanine, 7-methylguanine, O2-methylthymine, and O2-methylcytosine from the damaged DNA polymer formed by alkylation lesions. In Bacillus subtilis (strain 168), this protein is Putative DNA-3-methyladenine glycosylase YfjP (yfjP).